Here is a 282-residue protein sequence, read N- to C-terminus: MPDFPKEHATPMSNRPPAHQARKRFGQNFLRDTGVIDRIVRVIAPRSDQRLIEIGPGQGALTEPLLDAVGALEVIELDRDLIPGLRVQFFNYPDFVIHEGDALQFDFAALAAEGETPGKPLRVIGNLPYNISTPLIFHLLTARGAIADMHFMLQREVVERLAATPGSAAWGRLSVMTQYHCRVDNLFVVPAEAFTPRPKVESAIVRLIPHDEPPHVAHDEALFGDIVREAFGQRRKTLRNNLKTRLDDTAWAALDIDPGRRPQTLSVEELVRIANHVAETAP.

The segment at 1-21 is disordered; sequence MPDFPKEHATPMSNRPPAHQA. 6 residues coordinate S-adenosyl-L-methionine: N28, L30, G55, E76, D101, and N126.

The protein belongs to the class I-like SAM-binding methyltransferase superfamily. rRNA adenine N(6)-methyltransferase family. RsmA subfamily.

Its subcellular location is the cytoplasm. The catalysed reaction is adenosine(1518)/adenosine(1519) in 16S rRNA + 4 S-adenosyl-L-methionine = N(6)-dimethyladenosine(1518)/N(6)-dimethyladenosine(1519) in 16S rRNA + 4 S-adenosyl-L-homocysteine + 4 H(+). In terms of biological role, specifically dimethylates two adjacent adenosines (A1518 and A1519) in the loop of a conserved hairpin near the 3'-end of 16S rRNA in the 30S particle. May play a critical role in biogenesis of 30S subunits. This Chromohalobacter salexigens (strain ATCC BAA-138 / DSM 3043 / CIP 106854 / NCIMB 13768 / 1H11) protein is Ribosomal RNA small subunit methyltransferase A.